Reading from the N-terminus, the 217-residue chain is Ribonuclease HII (217 aa).

One can recognise an RNase H type-2 domain in the interval 27-216; that stretch reads SRVAGVDEAG…VKESIQEGVC (190 aa). 3 residues coordinate a divalent metal cation: Asp-33, Glu-34, and Asp-126.

The protein belongs to the RNase HII family. Mn(2+) is required as a cofactor. The cofactor is Mg(2+).

The protein localises to the cytoplasm. The catalysed reaction is Endonucleolytic cleavage to 5'-phosphomonoester.. Endonuclease that specifically degrades the RNA of RNA-DNA hybrids. The sequence is that of Ribonuclease HII from Chlamydia trachomatis serovar A (strain ATCC VR-571B / DSM 19440 / HAR-13).